A 943-amino-acid polypeptide reads, in one-letter code: Glutamate receptor ionotropic, NMDA 1 (943 aa).

A signal peptide spans 1-20; the sequence is MSTMRLLTLALLFSCSFARA. Over 21–580 the chain is Extracellular; that stretch reads ACDPKIVNIG…TLDSFMQPFQ (560 aa). Asparagine 61, asparagine 224, asparagine 260, asparagine 297, asparagine 321, asparagine 371, asparagine 389, asparagine 461, asparagine 492, and asparagine 512 each carry an N-linked (GlcNAc...) asparagine glycan. An intrachain disulfide couples cysteine 79 to cysteine 329. Cystine bridges form between cysteine 441–cysteine 475 and cysteine 457–cysteine 476. Proline 537, threonine 539, and arginine 544 together coordinate glycine. A helical membrane pass occupies residues 581–601; it reads STLWLLVGLSVHVVAVMLYLL. The Cytoplasmic segment spans residues 602 to 623; that stretch reads DRFSPFGRFKVNSEEEEEDALT. Positions 624-645 form an intramembrane region, discontinuously helical; it reads LSSAMWFSWGVLLNSGIGEGAP. The pore-forming stretch occupies residues 624-645; that stretch reads LSSAMWFSWGVLLNSGIGEGAP. Residues 646–651 lie on the Cytoplasmic side of the membrane; the sequence is RSFSAR. A helical transmembrane segment spans residues 652–668; sequence ILGMVWAGFAMIIVASY. Residues 669-833 lie on the Extracellular side of the membrane; it reads TANLAAFLVL…NAPATLTFEN (165 aa). Asparagine 695 is a glycosylation site (N-linked (GlcNAc...) asparagine). Residues serine 709 and aspartate 753 each coordinate glycine. Cysteine 765 and cysteine 819 form a disulfide bridge. Residue asparagine 792 is glycosylated (N-linked (GlcNAc...) asparagine). A helical transmembrane segment spans residues 834–854; it reads MAGVFMLVAGGIVAGIFLIFI. At 855–943 the chain is on the cytoplasmic side; that stretch reads EIAYKRHKDA…LSDPSVSTVV (89 aa). 4 positions are modified to phosphoserine: serine 910, serine 911, serine 917, and serine 918.

Belongs to the glutamate-gated ion channel (TC 1.A.10.1) family. NR1/GRIN1 subfamily. In terms of assembly, heterotetramer; the NMDAR subunits are modular and harbor tiered domains that function in concert to regulate opening and closing of the cation-selective ion channel pore. Forms heterotetrameric channels composed of two GluN1/zeta subunits (GRIN1), and two identical GluN2/epsilon subunits (GRIN2A, GRIN2B, GRIN2C or GRIN2D) or GluN3 subunits (GRIN3A or GRIN3B) (in vitro). Can also form heterotetrameric channels that contain at least two GluN1 subunits and at least two different GluN2 subunits (or a combination of one GluN2 and one GluN3 subunits) (in vitro). In vivo, the subunit composition may vary in function of the expression levels of the different subunits. Found in a complex with GRIN2A or GRIN2B, GRIN3A and PPP2CB. Found in a complex with GRIN2A or GRIN2B and GRIN3B. Interacts with SNX27 (via PDZ domain); the interaction is required for recycling to the plasma membrane when endocytosed and prevent degradation in lysosomes. Interacts with DLG4 and MPDZ. Interacts with LRFN1 and LRFN2. Interacts with MYZAP. Found in a complex with DLG4 and PRR7. Found in a complex with GRIN2B and PRR7. Interacts with PRR7; the interaction is reduced following NMDA receptor activity. Post-translationally, NMDA is probably regulated by C-terminal phosphorylation of an isoform of GRIN1 by PKC. Dephosphorylated on Ser-897 probably by protein phosphatase 2A (PPP2CB). Its phosphorylated state is influenced by the formation of the NMDAR-PPP2CB complex and the NMDAR channel activity.

It localises to the cell membrane. The protein localises to the postsynaptic cell membrane. It is found in the postsynaptic density membrane. Its subcellular location is the synaptic cell membrane. It carries out the reaction Ca(2+)(in) = Ca(2+)(out). The catalysed reaction is Na(+)(in) = Na(+)(out). It catalyses the reaction K(+)(in) = K(+)(out). Its function is as follows. Component of N-methyl-D-aspartate (NMDA) receptors (NMDARs) that function as heterotetrameric, ligand-gated cation channels with high calcium permeability and voltage-dependent block by Mg(2+). NMDARs participate in synaptic plasticity for learning and memory formation by contributing to the long-term potentiation (LTP). Channel activation requires binding of the neurotransmitter L-glutamate to the GluN2 subunit, glycine or D-serine binding to the GluN1 subunit, plus membrane depolarization to eliminate channel inhibition by Mg(2+). NMDARs mediate simultaneously the potasium efflux and the influx of calcium and sodium. Each GluN2 or GluN3 subunit confers differential attributes to channel properties, including activation, deactivation and desensitization kinetics, pH sensitivity, Ca2(+) permeability, and binding to allosteric modulators. The GluN3 subunits confer distinctive ion channel activation mechanism, which relies exclusively on glycine and does not involve glutamate. In Canis lupus familiaris (Dog), this protein is Glutamate receptor ionotropic, NMDA 1.